Here is a 371-residue protein sequence, read N- to C-terminus: O-phospho-L-seryl-tRNA:Cys-tRNA synthase 1 (371 aa).

Residues 78 to 79, asparagine 183, and 206 to 208 contribute to the pyridoxal 5'-phosphate site; these read AR and SGH. At lysine 209 the chain carries N6-(pyridoxal phosphate)lysine.

It belongs to the SepCysS family. Homodimer. Probably interacts with SepRS. Requires pyridoxal 5'-phosphate as cofactor.

The catalysed reaction is O-phospho-L-seryl-tRNA(Cys) + hydrogen sulfide + H(+) = L-cysteinyl-tRNA(Cys) + phosphate. In terms of biological role, converts O-phospho-L-seryl-tRNA(Cys) (Sep-tRNA(Cys)) to L-cysteinyl-tRNA(Cys) (Cys-tRNA(Cys)). The protein is O-phospho-L-seryl-tRNA:Cys-tRNA synthase 1 of Archaeoglobus fulgidus (strain ATCC 49558 / DSM 4304 / JCM 9628 / NBRC 100126 / VC-16).